The following is a 314-amino-acid chain: Olfactory receptor 2W3 (314 aa).

At 1–25 (MDGTNGSTQTHFILLGFSDRPHLER) the chain is on the extracellular side. N5 carries an N-linked (GlcNAc...) asparagine glycan. Residues 26–49 (ILFVVILIAYLLTLVGNTTIILVS) traverse the membrane as a helical segment. Residues 50-57 (RLDPHLHT) are Cytoplasmic-facing. A helical transmembrane segment spans residues 58–79 (PMYFFLAHLSFLDLSFTTSSIP). Over 80-100 (QLLYNLNGCDKTISYMGCAIQ) the chain is Extracellular. Residues 101-120 (LFLFLGLGGVECLLLAVMAY) form a helical membrane-spanning segment. At 121-139 (DRCVAICKPLHYMVIMNPR) the chain is on the cytoplasmic side. Residues 140-158 (LCRGLVSVTWGCGVANSLA) traverse the membrane as a helical segment. At 159–195 (MSPVTLRLPRCGHHEVDHFLREMPALIRMACVSTVAI) the chain is on the extracellular side. Residues 196 to 219 (EGTVFVLAVGVVLSPLVFILLSYS) traverse the membrane as a helical segment. Topologically, residues 220-236 (YIVRAVLQIRSASGRQK) are cytoplasmic. Residues 237–259 (AFGTCGSHLTVVSLFYGNIIYMY) form a helical membrane-spanning segment. Over 260–272 (MQPGASSSQDQGM) the chain is Extracellular. A helical transmembrane segment spans residues 273-292 (FLMLFYNIVTPLLNPLIYTL). Over 293–314 (RNREVKGALGRLLLGKRELGKE) the chain is Cytoplasmic.

Belongs to the G-protein coupled receptor 1 family.

Its subcellular location is the cell membrane. Functionally, odorant receptor. This chain is Olfactory receptor 2W3 (OR2W3), found in Homo sapiens (Human).